The following is a 709-amino-acid chain: Ribosomal RNA large subunit methyltransferase K/L (709 aa).

One can recognise a THUMP domain in the interval 43 to 154 (LAYRITLWTR…NGVITIAMNF (112 aa)).

This sequence belongs to the methyltransferase superfamily. RlmKL family.

Its subcellular location is the cytoplasm. It catalyses the reaction guanosine(2445) in 23S rRNA + S-adenosyl-L-methionine = N(2)-methylguanosine(2445) in 23S rRNA + S-adenosyl-L-homocysteine + H(+). It carries out the reaction guanosine(2069) in 23S rRNA + S-adenosyl-L-methionine = N(2)-methylguanosine(2069) in 23S rRNA + S-adenosyl-L-homocysteine + H(+). Functionally, specifically methylates the guanine in position 2445 (m2G2445) and the guanine in position 2069 (m7G2069) of 23S rRNA. This chain is Ribosomal RNA large subunit methyltransferase K/L, found in Shewanella baltica (strain OS185).